The sequence spans 590 residues: MRTHYSSDINEKLQGQKVTVCGWVHRRRDHGGVIFLDIRDRTGLVQLVFNPDNDNFKVADSLRSEFVIKAEGVVNLRPEGQENKNISSGKVEIIGDSIEVINKSKTIPFQLDDFQSTGEDVKLKYRYIDLRRPEMQHKLITRSKAIRYVRNFLDNNGFLDIETPFLTKATPEGARDYLVPSRNFNGKFYALPQSPQLFKQLLMVSGFDRYYQIVKCFRDEDLRADRQPEFTQIDIEASFIDEAFIMSTMERMIAGLFKETIGVEFATPFQVMTFADAIDKYGSDKPDLRIPLEFVNIKEDMQNEEFKVFSGPANDPQSRVIALRIPGGNDKLTRKMIDEYTKFVGIYGAKGLAYIKINSLSQGKEGLQSPIVKNISEETLFKVIDKTSAKEGDLLFFGAGKAKIVNDSMGALRAKIGEDLDLFNKDWAPLWVVDFPMFEKDDNRLYAMHHPFTAPKVSSVEDLVNTNPEELSSRAYDMVINGYEVGGGSIRIHKQDIQAKVFNLLGISDDEAREKFGFMLDALSYGTPIHGGIAFGIDRLIMLLTGTTNIRDVIAFPKTQTASCLMTEAPSTVSLEQLNELGIAVKKEER.

Residue Glu-172 participates in L-aspartate binding. The segment at 196–199 (QLFK) is aspartate. Arg-218 is an L-aspartate binding site. Residues 218-220 (RDE) and Gln-227 each bind ATP. His-449 provides a ligand contact to L-aspartate. Glu-484 is a binding site for ATP. Arg-491 lines the L-aspartate pocket. 536-539 (GIDR) provides a ligand contact to ATP.

It belongs to the class-II aminoacyl-tRNA synthetase family. Type 1 subfamily. As to quaternary structure, homodimer.

It localises to the cytoplasm. The catalysed reaction is tRNA(Asx) + L-aspartate + ATP = L-aspartyl-tRNA(Asx) + AMP + diphosphate. Aspartyl-tRNA synthetase with relaxed tRNA specificity since it is able to aspartylate not only its cognate tRNA(Asp) but also tRNA(Asn). Reaction proceeds in two steps: L-aspartate is first activated by ATP to form Asp-AMP and then transferred to the acceptor end of tRNA(Asp/Asn). In Francisella tularensis subsp. tularensis (strain SCHU S4 / Schu 4), this protein is Aspartate--tRNA(Asp/Asn) ligase.